Here is a 45-residue protein sequence, read N- to C-terminus: Large ribosomal subunit protein bL34 (45 aa).

This sequence belongs to the bacterial ribosomal protein bL34 family.

In Clavibacter michiganensis subsp. michiganensis (strain NCPPB 382), this protein is Large ribosomal subunit protein bL34.